The sequence spans 1155 residues: DNA-directed RNA polymerase subunit beta (1155 aa).

Belongs to the RNA polymerase beta chain family. The RNAP catalytic core consists of 2 alpha, 1 beta, 1 beta' and 1 omega subunit. When a sigma factor is associated with the core the holoenzyme is formed, which can initiate transcription.

It catalyses the reaction RNA(n) + a ribonucleoside 5'-triphosphate = RNA(n+1) + diphosphate. In terms of biological role, DNA-dependent RNA polymerase catalyzes the transcription of DNA into RNA using the four ribonucleoside triphosphates as substrates. This is DNA-directed RNA polymerase subunit beta from Thermobifida fusca (strain YX).